A 926-amino-acid polypeptide reads, in one-letter code: Beta-mannosidase A (926 aa).

The signal sequence occupies residues 1–21 (MHVKAETVLALLTPAPPSVVG). Residues Asn40, Asn242, Asn277, Asn311, and Asn342 are each glycosylated (N-linked (GlcNAc...) asparagine). Glu474 functions as the Proton donor in the catalytic mechanism. 10 N-linked (GlcNAc...) asparagine glycosylation sites follow: Asn532, Asn603, Asn626, Asn653, Asn733, Asn756, Asn785, Asn793, Asn819, and Asn905.

The protein belongs to the glycosyl hydrolase 2 family. Beta-mannosidase A subfamily. Homodimer.

Its subcellular location is the secreted. It carries out the reaction Hydrolysis of terminal, non-reducing beta-D-mannose residues in beta-D-mannosides.. It participates in glycan metabolism; N-glycan degradation. Functionally, exoglycosidase that cleaves the single beta-linked mannose residue from the non-reducing end of beta-mannosidic oligosaccharides of various complexity and length. Involved in the degradation of polymeric mannan and galactomannan. The polypeptide is Beta-mannosidase A (mndA) (Aspergillus fumigatus (strain ATCC MYA-4609 / CBS 101355 / FGSC A1100 / Af293) (Neosartorya fumigata)).